The primary structure comprises 577 residues: Probable ATP-dependent RNA helicase DDX55 homolog (577 aa).

Residues 7-37 (AVATKTYREKLGPEILEVFDKSYKSFTDVQV) carry the Q motif motif. Positions 40 to 218 (GTHLLNLSDV…VFGLRNAKQV (179 aa)) constitute a Helicase ATP-binding domain. 53 to 60 (SPTGSGKT) contributes to the ATP binding site. Residues 166–169 (DEAD) carry the DEAD box motif. Residues 231–393 (TLKNYFVECP…EVKVPTSTSR (163 aa)) form the Helicase C-terminal domain. Residues 508-577 (AKEKKRREKE…LSKKEIKDVL (70 aa)) form a disordered region. Positions 510–530 (EKKRREKEARKMKRAGGRFKS) are enriched in basic residues.

The protein belongs to the DEAD box helicase family. DDX55/SPB4 subfamily.

The catalysed reaction is ATP + H2O = ADP + phosphate + H(+). In terms of biological role, probable ATP-binding RNA helicase. The polypeptide is Probable ATP-dependent RNA helicase DDX55 homolog (Caenorhabditis briggsae).